Reading from the N-terminus, the 939-residue chain is Isoleucine--tRNA ligase (939 aa).

The short motif at 57 to 67 (PYANGHIHIGH) is the 'HIGH' region element. Glutamate 563 is an L-isoleucyl-5'-AMP binding site. The 'KMSKS' region signature appears at 604 to 608 (KMSKS). Lysine 607 lines the ATP pocket. Residues cysteine 903, cysteine 906, cysteine 921, and cysteine 924 each coordinate Zn(2+).

Belongs to the class-I aminoacyl-tRNA synthetase family. IleS type 1 subfamily. In terms of assembly, monomer. Requires Zn(2+) as cofactor.

It localises to the cytoplasm. It carries out the reaction tRNA(Ile) + L-isoleucine + ATP = L-isoleucyl-tRNA(Ile) + AMP + diphosphate. Functionally, catalyzes the attachment of isoleucine to tRNA(Ile). As IleRS can inadvertently accommodate and process structurally similar amino acids such as valine, to avoid such errors it has two additional distinct tRNA(Ile)-dependent editing activities. One activity is designated as 'pretransfer' editing and involves the hydrolysis of activated Val-AMP. The other activity is designated 'posttransfer' editing and involves deacylation of mischarged Val-tRNA(Ile). In Sulfurihydrogenibium sp. (strain YO3AOP1), this protein is Isoleucine--tRNA ligase.